A 317-amino-acid chain; its full sequence is Acetylglutamate kinase (317 aa).

Substrate contacts are provided by residues 70 to 71 (GG), R92, and N191.

The protein belongs to the acetylglutamate kinase family. ArgB subfamily.

It is found in the cytoplasm. It catalyses the reaction N-acetyl-L-glutamate + ATP = N-acetyl-L-glutamyl 5-phosphate + ADP. It participates in amino-acid biosynthesis; L-arginine biosynthesis; N(2)-acetyl-L-ornithine from L-glutamate: step 2/4. Catalyzes the ATP-dependent phosphorylation of N-acetyl-L-glutamate. This is Acetylglutamate kinase from Corynebacterium glutamicum (strain R).